The sequence spans 948 residues: MKEPSIVVKGARAHNLKDIDIELPKNKLIVMTGLSGSGKSSLAFDTIYAEGQRRYVESLSAYARQFLGQMDKPDVDTIEGLSPAISIDQKTTSKNPRSTVATVTEIYDYIRLLYARVGKPYCPNHNIEIESQTVQQMVDRIMELEARTKIQLLAPVIAHRKGSHEKLIEDIGKKGYVRLRIDGEIVDVNDVPTLDKNKNHTIEVVVDRLVVKDGIETRLADSIETALELSEGQLTVDVIDGEDLKFSESHACPICGFSIGELEPRMFSFNSPFGACPTCDGLGQKLTVDVDLVVPDKDKTLNEGAIEPWIPTSSDFYPTLLKRVCEVYKINMDKPFKKLTERQRDILLYGSGDKEIEFTFTQRQGGTRKRTMVFEGVVPNISRRFHESPSEYTREMMSKYMTELPCETCHGKRLSREALSVYVGGLNIGEVVEYSISQALNYYKNIDLSEQDQAIANQILKEIISRLTFLNNVGLEYLTLNRASGTLSGGEAQRIRLATQIGSRLTGVLYVLDEPSIGLHQRDNDRLINTLKEMRDLGNTLIVVEHDDDTMRAADYLVDIGPGAGEHGGQIVSSGTPQKVMKDKKSLTGQYLSGKKRIEVPEYRRPASDRKISIRGARSNNLKGVDVDIPLSIMTVVTGVSGSGKSSLVNEVLYKSLAQKINKSKVKPGLYDKIEGIDQLDKIIDIDQSPIGRTPRSNPATYTGVFDDIRDVFAQTNEAKIRGYQKGRFSFNVKGGRCEACKGDGIIKIEMHFLPDVYVPCEVCDGKRYNRETLEVTYKGKNIADILEMTVEEATQFFENIPKIKRKLQTLVDVGLGYVTLGQQATTLSGGEAQRVKLASELHKRSTGKSIYILDEPTTGLHVDDISRLLKVLNRLVENGDTVVIIEHNLDVIKTADYIIDLGPEGGSGGGTIVATGTPEDIAQTKSSYTGKYLKEVLERDKQNTEDK.

Residue 33 to 40 (GLSGSGKS) coordinates ATP. Residues 252 to 279 (CPICGFSIGELEPRMFSFNSPFGACPTC) form a C4-type zinc finger. ABC transporter domains follow at residues 309-587 (WIPT…KKSL) and 607-935 (ASDR…KYLK). An ATP-binding site is contributed by 639 to 646 (GVSGSGKS). A C4-type zinc finger spans residues 738–764 (CEACKGDGIIKIEMHFLPDVYVPCEVC).

This sequence belongs to the ABC transporter superfamily. UvrA family. In terms of assembly, forms a heterotetramer with UvrB during the search for lesions.

Its subcellular location is the cytoplasm. Functionally, the UvrABC repair system catalyzes the recognition and processing of DNA lesions. UvrA is an ATPase and a DNA-binding protein. A damage recognition complex composed of 2 UvrA and 2 UvrB subunits scans DNA for abnormalities. When the presence of a lesion has been verified by UvrB, the UvrA molecules dissociate. This is UvrABC system protein A from Staphylococcus aureus (strain MSSA476).